Here is a 203-residue protein sequence, read N- to C-terminus: Ribosome maturation factor RimP (203 aa).

The segment covering 1-21 (MSDSEATTSTDRSESNSTATI) has biased composition (polar residues). The interval 1–23 (MSDSEATTSTDRSESNSTATIHN) is disordered.

The protein belongs to the RimP family.

It localises to the cytoplasm. Functionally, required for maturation of 30S ribosomal subunits. In Paenarthrobacter aurescens (strain TC1), this protein is Ribosome maturation factor RimP.